Consider the following 179-residue polypeptide: Transthyretin-like protein 46 (179 aa).

The first 17 residues, 1–17 (MNKLFVLLIALLGLTAA), serve as a signal peptide directing secretion. The tract at residues 144 to 179 (RRGGFNADYMDPDNSEKDQSKSSEESEDKEKTVETF) is disordered. Residues 157-179 (NSEKDQSKSSEESEDKEKTVETF) are compositionally biased toward basic and acidic residues.

Belongs to the nematode transthyretin-like family.

The protein localises to the secreted. The sequence is that of Transthyretin-like protein 46 (ttr-46) from Caenorhabditis elegans.